The sequence spans 220 residues: Kinetochore protein Spc25 (220 aa).

Positions 41-119 (ILLDVKEAAA…NEIMERIHTL (79 aa)) form a coiled coil.

It belongs to the SPC25 family. Component of the Ndc80 complex, which is composed of Ndc80, Nuf2 and Spc25.

The protein resides in the nucleus. It localises to the chromosome. The protein localises to the centromere. Its subcellular location is the kinetochore. Acts as a component of the essential kinetochore-associated Ndc80 complex, which is required for chromosome segregation and spindle checkpoint activity during meiosis and mitosis. Required for kinetochore integrity and the organization of stable microtubule binding sites in the outer plate of the kinetochore. Participates in SAC signaling that responds specifically to disruptions in spindle microtubule dynamics. The NDC80 complex synergistically enhances the affinity of the SKA1 complex for microtubules and may allow the NDC80 complex to track depolymerizing microtubules. This Drosophila erecta (Fruit fly) protein is Kinetochore protein Spc25.